The sequence spans 288 residues: Ribosomal protein L11 methyltransferase (288 aa).

Thr-134, Gly-157, Asp-179, and Asn-224 together coordinate S-adenosyl-L-methionine.

It belongs to the methyltransferase superfamily. PrmA family.

The protein localises to the cytoplasm. It catalyses the reaction L-lysyl-[protein] + 3 S-adenosyl-L-methionine = N(6),N(6),N(6)-trimethyl-L-lysyl-[protein] + 3 S-adenosyl-L-homocysteine + 3 H(+). Functionally, methylates ribosomal protein L11. In Caulobacter sp. (strain K31), this protein is Ribosomal protein L11 methyltransferase.